The following is a 777-amino-acid chain: Hepatocyte growth factor-regulated tyrosine kinase substrate (777 aa).

The 129-residue stretch at 15-143 folds into the VHS domain; that stretch reads ATSQLLLETD…IMKVEGHVFP (129 aa). The FYVE-type zinc-finger motif lies at 160 to 220; it reads WVDAEECHRC…VCEPCYEQLN (61 aa). Zn(2+)-binding residues include Cys166, Cys169, Cys182, Cys185, Cys190, and Cys193. An N6-acetyllysine modification is found at Lys207. Cys212 and Cys215 together coordinate Zn(2+). Position 216 is a phosphotyrosine (Tyr216). The tract at residues 223-319 is disordered; the sequence is AEGKATSTTE…SPVNSSAPLA (97 aa). Positions 225–543 are interaction with SNX1; it reads GKATSTTELP…QRLQEQEKER (319 aa). The region spanning 258–277 is the UIM domain; that stretch reads QEEEELQLALALSQSEAEEK. Positions 290-311 are enriched in low complexity; sequence PKAEPMPSASSAPPASSLYSSP. Phosphotyrosine is present on residues Tyr308, Tyr329, and Tyr334. The segment at 338–407 is disordered; it reads KQEEARKSPT…NGESEESHEQ (70 aa). Residues 445-543 form an interaction with SNAP25 and TRAK2 region; that stretch reads SINGMHPQLL…QRLQEQEKER (99 aa). An interaction with STAM region spans residues 454–572; sequence LELLNQLDER…FPLPYAQLQA (119 aa). Residues 480–777 form an interaction with NF2 region; that stretch reads ARGALSALRE…GSEAQLISFD (298 aa). Position 551 is an N6-succinyllysine (Lys551). A disordered region spans residues 718 to 777; sequence LPSQDASLPPQQPYIAGQQPMYQQMAPSGGPPQQQPPVAQQPQAQGPPAQGSEAQLISFD. Low complexity predominate over residues 753–768; the sequence is PPVAQQPQAQGPPAQG.

In terms of assembly, component of the ESCRT-0 complex composed of STAM or STAM2 and HGS. Part of a complex at least composed of HSG, STAM2 (or probably STAM) and EPS15. Interacts with STAM. Interacts with STAM2. Interacts with EPS15; the interaction is direct, calcium-dependent and inhibited by SNAP25. Identified in a complex with STAM and LITAF. Found in a complex with STAM and E3 ligase ITCH and DTX3L. Interacts with E3 ligase DTX3L; the interaction brings together STAM and HSG, promotes their recruitment to early endosomes and decreases STAM and HGS ubiquitination by ITCH. Interacts with NF2; the interaction is direct. Interacts with ubiquitin; the interaction is direct. Interacts with VPS37C. Interacts with SMAD1, SMAD2 and SMAD3. Interacts with TSG101; the interaction mediates the association with the ESCRT-I complex. Interacts with SNAP25; the interaction is direct and decreases with addition of increasing concentrations of free calcium. Interacts with SNX1; the interaction is direct. Component of a 550 kDa membrane complex at least composed of HGS and SNX1 but excluding EGFR. Interacts with TRAK1. Interacts with TRAK2. Component of the CART complex, at least composed of ACTN4, HGS/HRS, MYO5B and TRIM3. Interacts (via UIM domain) with UBQLN1 (via ubiquitin-like domain). Interacts with ARRDC3. Identified in a complex containing at least ARRDC4, AVPR2 and HGS. Interacts with LAPTM4B; promotes HGS ubiquitination. In terms of processing, phosphorylated on Tyr-334. A minor site of phosphorylation on Tyr-329 is detected. Phosphorylation occurs in response to EGF, IL-2, GM-CSF and HGF. Ubiquitinated. Ubiquitinated by ITCH. As to expression, ubiquitous expression in adult and fetal tissues with higher expression in testis and peripheral blood leukocytes.

Its subcellular location is the cytoplasm. The protein resides in the early endosome membrane. It localises to the endosome. The protein localises to the multivesicular body membrane. Its function is as follows. Involved in intracellular signal transduction mediated by cytokines and growth factors. When associated with STAM, it suppresses DNA signaling upon stimulation by IL-2 and GM-CSF. Could be a direct effector of PI3-kinase in vesicular pathway via early endosomes and may regulate trafficking to early and late endosomes by recruiting clathrin. May concentrate ubiquitinated receptors within clathrin-coated regions. Involved in down-regulation of receptor tyrosine kinase via multivesicular body (MVBs) when complexed with STAM (ESCRT-0 complex). The ESCRT-0 complex binds ubiquitin and acts as a sorting machinery that recognizes ubiquitinated receptors and transfers them to further sequential lysosomal sorting/trafficking processes. May contribute to the efficient recruitment of SMADs to the activin receptor complex. Involved in receptor recycling via its association with the CART complex, a multiprotein complex required for efficient transferrin receptor recycling but not for EGFR degradation. This Homo sapiens (Human) protein is Hepatocyte growth factor-regulated tyrosine kinase substrate (HGS).